The primary structure comprises 253 residues: uncharacterized protein (253 aa).

A substrate-binding site is contributed by Ser145. The Proton acceptor role is filled by Tyr159.

It belongs to the short-chain dehydrogenases/reductases (SDR) family.

This is an uncharacterized protein from Mycobacterium tuberculosis (strain CDC 1551 / Oshkosh).